The sequence spans 507 residues: ATP synthase subunit alpha, chloroplastic (507 aa).

170 to 177 (GDRQTGKT) contacts ATP.

This sequence belongs to the ATPase alpha/beta chains family. As to quaternary structure, F-type ATPases have 2 components, CF(1) - the catalytic core - and CF(0) - the membrane proton channel. CF(1) has five subunits: alpha(3), beta(3), gamma(1), delta(1), epsilon(1). CF(0) has four main subunits: a, b, b' and c.

Its subcellular location is the plastid. It is found in the chloroplast thylakoid membrane. The enzyme catalyses ATP + H2O + 4 H(+)(in) = ADP + phosphate + 5 H(+)(out). Its function is as follows. Produces ATP from ADP in the presence of a proton gradient across the membrane. The alpha chain is a regulatory subunit. The chain is ATP synthase subunit alpha, chloroplastic from Lemna minor (Common duckweed).